A 28-amino-acid chain; its full sequence is NU-theraphotoxin-Preg1a (28 aa).

Intrachain disulfides connect C2-C19, C9-C22, and C18-C27.

As to expression, expressed by the venom gland.

It localises to the secreted. In terms of biological role, toxin that acts as an agonist on melanocortin receptors (MC1R, MC3R, MC5R, MC5R). After binding to MC1R, the peptide activates the hMC1R/Gs pathway, but after binding to MC4R, it is not able to activate or antagonize the MC4R/Gs pathway. Inhibits melanocyte stimulating hormone (MSH)-binding to human receptors (Ki=1.8 uM to MC1R, Ki=19.8 uM to MC3R, Ki=7.1 uM to MC4R, Ki=10.0 uM to MC5R). This toxin is structurally unrelated to the natural agonists. The sequence is that of NU-theraphotoxin-Preg1a from Poecilotheria regalis (Indian ornamental tree spider).